The following is a 235-amino-acid chain: Uridylate kinase (235 aa).

Lysine 12 to glycine 15 is an ATP binding site. Glycine 54 is a UMP binding site. ATP is bound by residues glycine 55 and arginine 59. UMP-binding positions include aspartate 72 and threonine 133–threonine 140. Tyrosine 166 and aspartate 169 together coordinate ATP.

This sequence belongs to the UMP kinase family. As to quaternary structure, homohexamer.

The protein resides in the cytoplasm. The enzyme catalyses UMP + ATP = UDP + ADP. Its pathway is pyrimidine metabolism; CTP biosynthesis via de novo pathway; UDP from UMP (UMPK route): step 1/1. With respect to regulation, inhibited by UTP. Its function is as follows. Catalyzes the reversible phosphorylation of UMP to UDP. This Acetivibrio thermocellus (strain ATCC 27405 / DSM 1237 / JCM 9322 / NBRC 103400 / NCIMB 10682 / NRRL B-4536 / VPI 7372) (Clostridium thermocellum) protein is Uridylate kinase.